The primary structure comprises 361 residues: Large ribosomal subunit protein mL45 (361 aa).

Positions 319–361 (EPPKELSAGDAEVKQVDSVGEQSKEQLPLATPVESHTKPSLAI) are disordered.

The protein belongs to the mitochondrion-specific ribosomal protein mL45 family.

The protein localises to the mitochondrion. The protein is Large ribosomal subunit protein mL45 (mRpL45) of Drosophila melanogaster (Fruit fly).